The chain runs to 355 residues: 3-isopropylmalate dehydrogenase (355 aa).

The substrate site is built by arginine 90, arginine 100, arginine 128, and aspartate 222. Positions 222, 246, and 250 each coordinate Mg(2+). 280-292 provides a ligand contact to NAD(+); the sequence is GSAPDIAGKGIAN.

It belongs to the isocitrate and isopropylmalate dehydrogenases family. LeuB type 1 subfamily. As to quaternary structure, homodimer. It depends on Mg(2+) as a cofactor. Requires Mn(2+) as cofactor.

Its subcellular location is the cytoplasm. The catalysed reaction is (2R,3S)-3-isopropylmalate + NAD(+) = 4-methyl-2-oxopentanoate + CO2 + NADH. The protein operates within amino-acid biosynthesis; L-leucine biosynthesis; L-leucine from 3-methyl-2-oxobutanoate: step 3/4. In terms of biological role, catalyzes the oxidation of 3-carboxy-2-hydroxy-4-methylpentanoate (3-isopropylmalate) to 3-carboxy-4-methyl-2-oxopentanoate. The product decarboxylates to 4-methyl-2 oxopentanoate. The sequence is that of 3-isopropylmalate dehydrogenase from Burkholderia multivorans (strain ATCC 17616 / 249).